The sequence spans 243 residues: Carboxy-S-adenosyl-L-methionine synthase (243 aa).

S-adenosyl-L-methionine is bound by residues Tyr-35, 68 to 70 (GCS), 92 to 93 (DN), and Arg-199.

It belongs to the class I-like SAM-binding methyltransferase superfamily. Cx-SAM synthase family. In terms of assembly, homodimer.

It carries out the reaction prephenate + S-adenosyl-L-methionine = carboxy-S-adenosyl-L-methionine + 3-phenylpyruvate + H2O. Functionally, catalyzes the conversion of S-adenosyl-L-methionine (SAM) to carboxy-S-adenosyl-L-methionine (Cx-SAM). This Helicobacter pylori (strain P12) protein is Carboxy-S-adenosyl-L-methionine synthase.